A 3032-amino-acid polypeptide reads, in one-letter code: DmX-like protein 2 (3032 aa).

WD repeat units lie at residues 108 to 145 (FLSSVTYNLAWDPQDNRLLTATDSIQLWAPPGGDILEE), 167 to 207 (KTSV…KSSI), and 230 to 278 (AHPR…EDCL). At Ser326 the chain carries Phosphoserine. The tract at residues 418–486 (QLDHESDDAD…HPRPSISMPL (69 aa)) is disordered. Over residues 422–434 (ESDDADREDEERS) the composition is skewed to acidic residues. A compositionally biased stretch (basic and acidic residues) spans 435–474 (QDERERGLRMKLDHELSLDRESEAGTGSSEHEDGEREGSP). At Ser473 the chain carries Phosphoserine. A WD 4 repeat occupies 492–532 (DRKIETLLTEWNKNPDMLFTIHPVDGTFLVWHVKYLDEYNP). Residues 577–598 (PSQQEMMSVDSPHGSQLHSPSH) are disordered. At Ser587 the chain carries Phosphoserine. Residues 589–598 (HGSQLHSPSH) show a composition bias toward polar residues. 3 WD repeats span residues 594–633 (HSPSHSTDMNILAPTVMMVSKHIDGSLNQWAVTFADKSAF), 750–802 (LHTS…RKLL), and 879–921 (QPSQ…VQAC). The tract at residues 937 to 958 (VPGQKNLDSSPETSSSMSSVPH) is disordered. A phosphoserine mark is found at Ser945 and Ser946. Residues 945-958 (SSPETSSSMSSVPH) show a composition bias toward low complexity. Residues 1001–1038 (LSSSSIYPVCLAPYLVVTTCSDNKVRFWKCCMETNSLG) form a WD 8 repeat. 3 positions are modified to phosphoserine: Ser1141, Ser1144, and Ser1152. 2 WD repeats span residues 1164 to 1205 (PNIK…VSDQ) and 1245 to 1285 (GTPS…GNVD). Residues Ser1288 and Ser1399 each carry the phosphoserine modification. The residue at position 1416 (Thr1416) is a Phosphothreonine. The interval 1443 to 1464 (RISEDSTKKPQSYEDHIESQSE) is disordered. A compositionally biased stretch (basic and acidic residues) spans 1444–1461 (ISEDSTKKPQSYEDHIES). Ser1856 is subject to Phosphoserine. Residues 1922–1953 (QLDSVSGRMENGPSESKPVSRSDGGSGADWSA) are disordered. Residue Thr2017 is modified to Phosphothreonine. Residues 2117–2146 (GSYERHQIERRRLQAKREHAERRKLWLQKN) adopt a coiled-coil conformation. 2 positions are modified to phosphoserine: Ser2394 and Ser2636. The span at 2722–2732 (QPGAASHSSSQ) shows a compositional bias: low complexity. The interval 2722–2744 (QPGAASHSSSQPHPPPSLPWLGS) is disordered. WD repeat units lie at residues 2757-2796 (RNLHNVKRMTSHPVHQYYLTGAQDGSVRMFEWTRPQQLVC), 2800-2839 (AGNARVTRLYFNSQGNKCGVADGEGFLSIWQVNQTASNPK), 2846-2888 (CHSK…GNSL), 2894-2933 (CHDHGATVLQYAPKQQLLISGGRKGYICIFDIRQRQLIHT), 2936-2975 (AHDSAIKALALDSCEEYFTTGSAEGNIKVWRLTGHGLIHS), and 2988-3026 (NIGAGVMQIAISQDNRLFSCGADGTLKTRVLPSAFNIPN).

In terms of assembly, interacts with MADD and RAB3GAP. As to expression, expressed in the brain and pituitary gland. Detected in the hippocampus, dentate gyrus, hypothalamus, pyriform cortex and the granular and molecular layers of the cerebellum of adult animals. In the hypothalamus, expression is observed in the arcuate nucleus, the ME, the organum vasculosum of the lamina terminalis, and the subfornical organ, the subcommissural organ, and the suprachiasmatic nucleus. Both tanycytes and hypothalamic neurosecretory neurons express the protein. Expressed in the inner and outer hair cells as well as in the spiral ganglion neurons. Expressed in insulin-secreting cells of the islets of Langerhans in the pancreas.

Its subcellular location is the cytoplasmic vesicle. The protein resides in the secretory vesicle. The protein localises to the synaptic vesicle membrane. It localises to the neuronal dense core vesicle. Functionally, may serve as a scaffold protein for MADD and RAB3GA on synaptic vesicles of neuronal and endocrine homeostatic processes. Plays a role in the brain as a key controller of neuronal and endocrine homeostatic processes. This chain is DmX-like protein 2 (Dmxl2), found in Mus musculus (Mouse).